A 132-amino-acid chain; its full sequence is Sec-independent protein translocase protein TatB (132 aa).

Residues 2–22 (FDGIGFMELLLIGILGLVVLG) form a helical membrane-spanning segment. The tract at residues 86–132 (LKSAAQSVNRPYKVEDISPASSSAPVDPAPTETKTAETSANSEKPNG) is disordered. Positions 103 to 115 (SPASSSAPVDPAP) are enriched in low complexity. A compositionally biased stretch (polar residues) spans 117 to 132 (ETKTAETSANSEKPNG).

The protein belongs to the TatB family. In terms of assembly, the Tat system comprises two distinct complexes: a TatABC complex, containing multiple copies of TatA, TatB and TatC subunits, and a separate TatA complex, containing only TatA subunits. Substrates initially bind to the TatABC complex, which probably triggers association of the separate TatA complex to form the active translocon.

The protein localises to the cell inner membrane. Its function is as follows. Part of the twin-arginine translocation (Tat) system that transports large folded proteins containing a characteristic twin-arginine motif in their signal peptide across membranes. Together with TatC, TatB is part of a receptor directly interacting with Tat signal peptides. TatB may form an oligomeric binding site that transiently accommodates folded Tat precursor proteins before their translocation. The polypeptide is Sec-independent protein translocase protein TatB (Shewanella sediminis (strain HAW-EB3)).